A 123-amino-acid chain; its full sequence is MASLNIIYFMRLYGIPSEDRAEEIANNIKEGEWVFVDRQENKKEFLSAEEAREKFKELINQVRSWKEQMSTLSKYAIFIFVDDTQNPKAIKVYDTSSLGCSTSLVPERWRLYRKEMEGEFNDN.

Residues 36-76 (VDRQENKKEFLSAEEAREKFKELINQVRSWKEQMSTLSKYA) adopt a coiled-coil conformation.

This is an uncharacterized protein from Aquifex aeolicus (strain VF5).